The chain runs to 736 residues: Catalase-peroxidase (736 aa).

Residues 1 to 21 (MSNEQKCPFSGTHGARTTVGT) are disordered. Positions 96–224 (WHSAGTYRTG…LAAVQMGLIY (129 aa)) form a cross-link, tryptophyl-tyrosyl-methioninium (Trp-Tyr) (with M-250). His-97 acts as the Proton acceptor in catalysis. Residues 224–250 (YVNPEGPDGNPDPVASGRDIRETFARM) constitute a cross-link (tryptophyl-tyrosyl-methioninium (Tyr-Met) (with W-96)). His-265 is a heme b binding site.

It belongs to the peroxidase family. Peroxidase/catalase subfamily. In terms of assembly, homodimer or homotetramer. Requires heme b as cofactor. Formation of the three residue Trp-Tyr-Met cross-link is important for the catalase, but not the peroxidase activity of the enzyme.

It catalyses the reaction H2O2 + AH2 = A + 2 H2O. The catalysed reaction is 2 H2O2 = O2 + 2 H2O. In terms of biological role, bifunctional enzyme with both catalase and broad-spectrum peroxidase activity. This is Catalase-peroxidase from Dechloromonas aromatica (strain RCB).